Reading from the N-terminus, the 386-residue chain is Succinate--CoA ligase [ADP-forming] subunit beta (386 aa).

ATP is bound by residues Lys-46, 53 to 55, Glu-99, Ala-102, and Glu-107; that span reads GRG. Mg(2+) contacts are provided by Asn-199 and Asp-213. Residues Asn-264 and 321–323 each bind substrate; that span reads GIV.

This sequence belongs to the succinate/malate CoA ligase beta subunit family. In terms of assembly, heterotetramer of two alpha and two beta subunits. The cofactor is Mg(2+).

It carries out the reaction succinate + ATP + CoA = succinyl-CoA + ADP + phosphate. The enzyme catalyses GTP + succinate + CoA = succinyl-CoA + GDP + phosphate. Its pathway is carbohydrate metabolism; tricarboxylic acid cycle; succinate from succinyl-CoA (ligase route): step 1/1. Its function is as follows. Succinyl-CoA synthetase functions in the citric acid cycle (TCA), coupling the hydrolysis of succinyl-CoA to the synthesis of either ATP or GTP and thus represents the only step of substrate-level phosphorylation in the TCA. The beta subunit provides nucleotide specificity of the enzyme and binds the substrate succinate, while the binding sites for coenzyme A and phosphate are found in the alpha subunit. The polypeptide is Succinate--CoA ligase [ADP-forming] subunit beta (Actinobacillus succinogenes (strain ATCC 55618 / DSM 22257 / CCUG 43843 / 130Z)).